A 177-amino-acid chain; its full sequence is Nuclear export protein (177 aa).

2 consecutive short sequence motifs (nuclear export signal) follow at residues 91 to 100 and 117 to 127; these read LWLPMKSLSL and MKHQILTRLKL.

Binds M1 protein. May interact with human nucleoporins and exportin XPO1/CRM1.

The protein resides in the virion. It localises to the host nucleus. Functionally, mediates the nuclear export of encapsidated genomic RNAs (ribonucleoproteins, RNPs). Acts as an adapter between viral RNPs complexes and the nuclear export machinery of the cell. Possesses no intrinsic RNA-binding activity, but includes a C-terminal M1-binding domain. This domain is believed to allow recognition of RNPs to which the M1 protein is bound. Because the M1 protein is not available in large quantities until the later stages of infection, such an indirect recognition mechanism probably ensures that genomic RNPs are not exported from the nucleus before sufficient quantities of viral mRNA and progeny genomic RNA have been synthesized. Furthermore, the RNPs enters the cytoplasm only when they have associated with the M1 protein that is necessary to guide them to the plasma membrane. May down-regulate viral RNA synthesis when overproduced. The chain is Nuclear export protein (NS) from Homo sapiens (Human).